The following is a 195-amino-acid chain: GTP cyclohydrolase 1 (195 aa).

Zn(2+)-binding residues include cysteine 86, histidine 89, and cysteine 158.

The protein belongs to the GTP cyclohydrolase I family. In terms of assembly, homomer.

It catalyses the reaction GTP + H2O = 7,8-dihydroneopterin 3'-triphosphate + formate + H(+). It participates in cofactor biosynthesis; 7,8-dihydroneopterin triphosphate biosynthesis; 7,8-dihydroneopterin triphosphate from GTP: step 1/1. The polypeptide is GTP cyclohydrolase 1 (Ruminiclostridium cellulolyticum (strain ATCC 35319 / DSM 5812 / JCM 6584 / H10) (Clostridium cellulolyticum)).